Here is a 384-residue protein sequence, read N- to C-terminus: Succinyl-diaminopimelate desuccinylase (384 aa).

Residue His71 participates in Zn(2+) binding. Residue Asp73 is part of the active site. Asp104 is a Zn(2+) binding site. Glu139 functions as the Proton acceptor in the catalytic mechanism. Zn(2+) contacts are provided by Glu140, Glu168, and His357.

It belongs to the peptidase M20A family. DapE subfamily. In terms of assembly, homodimer. Requires Zn(2+) as cofactor. The cofactor is Co(2+).

The catalysed reaction is N-succinyl-(2S,6S)-2,6-diaminopimelate + H2O = (2S,6S)-2,6-diaminopimelate + succinate. It functions in the pathway amino-acid biosynthesis; L-lysine biosynthesis via DAP pathway; LL-2,6-diaminopimelate from (S)-tetrahydrodipicolinate (succinylase route): step 3/3. In terms of biological role, catalyzes the hydrolysis of N-succinyl-L,L-diaminopimelic acid (SDAP), forming succinate and LL-2,6-diaminopimelate (DAP), an intermediate involved in the bacterial biosynthesis of lysine and meso-diaminopimelic acid, an essential component of bacterial cell walls. The chain is Succinyl-diaminopimelate desuccinylase from Bradyrhizobium sp. (strain BTAi1 / ATCC BAA-1182).